The following is a 206-amino-acid chain: Enterobactin synthase component D (206 aa).

3 residues coordinate Mg(2+): Asp-107, Glu-109, and Glu-152.

It belongs to the P-Pant transferase superfamily. EntD family. In terms of assembly, entB, EntD, EntE, and EntF form a multienzyme complex called enterobactin synthase. Mg(2+) serves as cofactor.

Its subcellular location is the membrane. The enzyme catalyses apo-[aryl-carrier protein] + CoA = holo-[aryl-carrier protein] + adenosine 3',5'-bisphosphate + H(+). It carries out the reaction apo-[peptidyl-carrier protein] + CoA = holo-[peptidyl-carrier protein] + adenosine 3',5'-bisphosphate + H(+). The protein operates within siderophore biosynthesis; enterobactin biosynthesis. In terms of biological role, involved in the biosynthesis of the siderophore enterobactin (enterochelin), which is a macrocyclic trimeric lactone of N-(2,3-dihydroxybenzoyl)-serine. The serine trilactone serves as a scaffolding for the three catechol functionalities that provide hexadentate coordination for the tightly ligated iron(2+) atoms. Plays an essential role in the assembly of the enterobactin by catalyzing the transfer of the 4'-phosphopantetheine (Ppant) moiety from coenzyme A to the apo-domains of both EntB (ArCP domain) and EntF (PCP domain) to yield their holo-forms which make them competent for the activation of 2,3-dihydroxybenzoate (DHB) and L-serine, respectively. The polypeptide is Enterobactin synthase component D (Escherichia coli (strain K12)).